A 153-amino-acid polypeptide reads, in one-letter code: Protein ElaA (153 aa).

The N-acetyltransferase domain maps to 7 to 151; the sequence is LHHSELSVSQ…PHIGMAREVI (145 aa).

This sequence belongs to the UPF0039 (ElaA) family.

The chain is Protein ElaA (elaA) from Escherichia coli (strain K12).